The primary structure comprises 175 residues: Large ribosomal subunit protein uL10 (175 aa).

Belongs to the universal ribosomal protein uL10 family. As to quaternary structure, part of the ribosomal stalk of the 50S ribosomal subunit. The N-terminus interacts with L11 and the large rRNA to form the base of the stalk. The C-terminus forms an elongated spine to which L12 dimers bind in a sequential fashion forming a multimeric L10(L12)X complex.

In terms of biological role, forms part of the ribosomal stalk, playing a central role in the interaction of the ribosome with GTP-bound translation factors. The sequence is that of Large ribosomal subunit protein uL10 from Psychrobacter cryohalolentis (strain ATCC BAA-1226 / DSM 17306 / VKM B-2378 / K5).